The chain runs to 351 residues: sn-glycerol-3-phosphate import ATP-binding protein UgpC (351 aa).

The region spanning 4–234 (ITLDNLVKAY…PATTFVAGFI (231 aa)) is the ABC transporter domain. Position 36 to 43 (36 to 43 (GPSGCGKS)) interacts with ATP.

This sequence belongs to the ABC transporter superfamily. sn-glycerol-3-phosphate importer (TC 3.A.1.1.3) family. As to quaternary structure, the complex is composed of two ATP-binding proteins (UgpC), two transmembrane proteins (UgpA and UgpE) and a solute-binding protein (UgpB).

It is found in the cell inner membrane. The enzyme catalyses sn-glycerol 3-phosphate(out) + ATP + H2O = sn-glycerol 3-phosphate(in) + ADP + phosphate + H(+). Part of the ABC transporter complex UgpBAEC involved in sn-glycerol-3-phosphate (G3P) import. Responsible for energy coupling to the transport system. This is sn-glycerol-3-phosphate import ATP-binding protein UgpC from Ruegeria pomeroyi (strain ATCC 700808 / DSM 15171 / DSS-3) (Silicibacter pomeroyi).